Here is a 468-residue protein sequence, read N- to C-terminus: FAD-linked oxidoreductase hasG (468 aa).

The FAD-binding PCMH-type domain occupies Leu37–Trp211.

It belongs to the oxygen-dependent FAD-linked oxidoreductase family. FAD is required as a cofactor.

Its pathway is secondary metabolite biosynthesis. In terms of biological role, FAD-linked oxidoreductase; part of the gene cluster that mediates the biosynthesis of hexadehydro-astechrome (HAS), a tryptophan-derived iron(III)-complex that acts as a virulence factor in infected mice. Within the pathway, hasG converts the prenyl to a methylbutadienyl side chain. The HAS biosynthesis begins with the synthesis of a tethered Trp-Ala dipeptide by the NRPS hasD. The 7-dimethylallyltryptophan synthase hasE then catalyzes the prenylation of the hasD-tethered tryptophan or the resulting tethered Trp-Ala dipeptide at the C-7 position of the indole moiety. HAS biosynthesis continues via tethered intermediates with the succesive actions of the cytochrome P450 monooxygenase hasH, the O-methyltransferase hasC, and the FAD-linked oxidoreductase hasG. The resulting O-methylated diketopiperazine is then released from hasD. Finally, three O-methylated diketopiperazine molecules assemble in a trimeric complex with Fe(III) to produce hexadehydro-astechrome. This chain is FAD-linked oxidoreductase hasG, found in Aspergillus fumigatus (strain CBS 144.89 / FGSC A1163 / CEA10) (Neosartorya fumigata).